Consider the following 600-residue polypeptide: Pyranose dehydrogenase 2 (600 aa).

Residues Met1–Gly25 form the signal peptide. N-linked (GlcNAc...) asparagine glycosylation is found at Asn99 and Asn114. His127 is subject to Tele-8alpha-FAD histidine. N-linked (GlcNAc...) asparagine glycans are attached at residues Asn199, Asn275, and Asn342. His535 acts as the Proton acceptor in catalysis. The active site involves His579.

The protein belongs to the GMC oxidoreductase family. Monomer. It depends on FAD as a cofactor. Post-translationally, N-glycosylated.

Its subcellular location is the secreted. It catalyses the reaction pyranose + acceptor = pyranos-2-ulose + reduced acceptor.. The catalysed reaction is pyranose + acceptor = pyranos-3-ulose + reduced acceptor.. It carries out the reaction pyranose + acceptor = pyranos-2,3-diulose + reduced acceptor.. The enzyme catalyses a pyranoside + acceptor = a pyranosid-3-ulose + reduced acceptor.. It catalyses the reaction a pyranoside + acceptor = a pyranosid-3,4-diulose + reduced acceptor.. Functionally, catalyzes the single-oxidation or sequential double oxidation reaction of carbohydrates primarily at carbon-2 and/or carbon-3 with the concomitant reduction of the flavin. The enzyme exhibits a broad sugar substrate specificity, oxidizing different aldopyranoses to the corresponding C-1, C-2, C-3 or C-1,2, C-2,3 and C-3,4 (di)dehydro sugars with substrate-specific regioselectivity. Accepts only a narrow range of electron acceptors such as substituted benzoquinones and complexed metal ions and reacts extremely slowly with O(2) as acceptor. May play a role in the natural recycling of plant matter by oxidizing all major monosaccharides in lignocellulose and by reducing quinone compounds or reactive radical species generated during lignin depolymerization. This Leucoagaricus meleagris (Western flat-topped agaric) protein is Pyranose dehydrogenase 2.